Here is a 295-residue protein sequence, read N- to C-terminus: Energy-coupling factor transporter ATP-binding protein EcfA2 (295 aa).

In terms of domain architecture, ABC transporter spans 3–246 (ITFKQVDFTY…PAWLTAHQLG (244 aa)). 40–47 (GHTGSGKS) is an ATP binding site.

The protein belongs to the ABC transporter superfamily. Energy-coupling factor EcfA family. Forms a stable energy-coupling factor (ECF) transporter complex composed of 2 membrane-embedded substrate-binding proteins (S component), 2 ATP-binding proteins (A component) and 2 transmembrane proteins (T component).

The protein localises to the cell membrane. Functionally, ATP-binding (A) component of a common energy-coupling factor (ECF) ABC-transporter complex. Unlike classic ABC transporters this ECF transporter provides the energy necessary to transport a number of different substrates. In Lactiplantibacillus plantarum (strain ATCC BAA-793 / NCIMB 8826 / WCFS1) (Lactobacillus plantarum), this protein is Energy-coupling factor transporter ATP-binding protein EcfA2.